The sequence spans 482 residues: tRNA sulfurtransferase (482 aa).

The THUMP domain maps to 61–165; that stretch reads DQILAILMQT…YDHLHQVLHR (105 aa). Residues 183-184, Lys-265, Gly-287, and Gln-296 contribute to the ATP site; that span reads LI. Cys-344 and Cys-456 are oxidised to a cystine. One can recognise a Rhodanese domain in the interval 404–482; that stretch reads IGDGAIVLDI…GYGNIKVYRP (79 aa). Cys-456 serves as the catalytic Cysteine persulfide intermediate.

It belongs to the ThiI family.

Its subcellular location is the cytoplasm. The enzyme catalyses [ThiI sulfur-carrier protein]-S-sulfanyl-L-cysteine + a uridine in tRNA + 2 reduced [2Fe-2S]-[ferredoxin] + ATP + H(+) = [ThiI sulfur-carrier protein]-L-cysteine + a 4-thiouridine in tRNA + 2 oxidized [2Fe-2S]-[ferredoxin] + AMP + diphosphate. It catalyses the reaction [ThiS sulfur-carrier protein]-C-terminal Gly-Gly-AMP + S-sulfanyl-L-cysteinyl-[cysteine desulfurase] + AH2 = [ThiS sulfur-carrier protein]-C-terminal-Gly-aminoethanethioate + L-cysteinyl-[cysteine desulfurase] + A + AMP + 2 H(+). It functions in the pathway cofactor biosynthesis; thiamine diphosphate biosynthesis. Its function is as follows. Catalyzes the ATP-dependent transfer of a sulfur to tRNA to produce 4-thiouridine in position 8 of tRNAs, which functions as a near-UV photosensor. Also catalyzes the transfer of sulfur to the sulfur carrier protein ThiS, forming ThiS-thiocarboxylate. This is a step in the synthesis of thiazole, in the thiamine biosynthesis pathway. The sulfur is donated as persulfide by IscS. In Photobacterium profundum (strain SS9), this protein is tRNA sulfurtransferase.